Consider the following 731-residue polypeptide: 1,4-alpha-glucan branching enzyme GlgB 2 (731 aa).

Asp410 serves as the catalytic Nucleophile. Glu463 acts as the Proton donor in catalysis.

Belongs to the glycosyl hydrolase 13 family. GlgB subfamily. As to quaternary structure, monomer.

The enzyme catalyses Transfers a segment of a (1-&gt;4)-alpha-D-glucan chain to a primary hydroxy group in a similar glucan chain.. The protein operates within glycan biosynthesis; glycogen biosynthesis. Its function is as follows. Catalyzes the formation of the alpha-1,6-glucosidic linkages in glycogen by scission of a 1,4-alpha-linked oligosaccharide from growing alpha-1,4-glucan chains and the subsequent attachment of the oligosaccharide to the alpha-1,6 position. The chain is 1,4-alpha-glucan branching enzyme GlgB 2 from Xanthomonas oryzae pv. oryzae (strain MAFF 311018).